The chain runs to 157 residues: uncharacterized protein (157 aa).

To E.coli YcjD and H.influenzae HI_0925.

This is an uncharacterized protein from Haemophilus influenzae (strain ATCC 51907 / DSM 11121 / KW20 / Rd).